Reading from the N-terminus, the 921-residue chain is MATPSAAFEALMNGVTSWDVPEDAVPCELLLIGEASFPVMVNDMGQVLIATSSYGRGRLVVVSHEDYLVEAQLTPFLLNAVGWLCSSPGAPIGVHPSLAPLAKILEGSGVDAKVEPEVKDSLGVYCIDAYNETMTEKLVKFMKRGGGLLIGGQAWDWANQGEDERVLFTFPGNLVTSVAGIYFTDNKGDTSFFKVSKKMPKIPVLVSCEDDLSEDREELLHGISELDISNSDCFPSQLLVHGALAFPLGLDSYHGCVIAAARYGRGRVVVTGHKVLFTVGKLGPFLLNAVRWLDGGRRGKVVVQTELRTLSGLLAVGGIDTSIEPNLTSDASVYCFEPVSEVGVKELQEFVAEGGGLFVGAQAWWWAFKNPGVSPLARFPGNLLLNPFGISITSQSLNPGPFRTPKAGIRTYHFRSTLAEFQVIMGRKRGNVEKGWLAKLGPDGAAFLQIPAEEIPAYMSVHRLLRKLLSRYRLPVATRENPVINDCCRGAMLSLATGLAHSGSDLSLLVPEIEDMYSSPYLRPSESPITVEVNCTNPGTRYCWMSTGLYIPGRQIIEVSLPEAAASADLKIQIGCHTDDLTRASKLFRGPLVINRCCLDKPTKSITCLWGGLLYIIVPQNSKLGSVPVTVKGAVHAPYYKLGETTLEEWKRHIQENPGPWGELATDNIILTVPTANLRTLENPEPLLRLWDEVMQAVARLGAEPFPLRLPQRIVADVQISVGWMHAGYPIMCHLESVQELINEKLIRTKGLWGPVHELGRNQQRQEWEFPPHTTEATCNLWCVYVHETVLGIPRSRANIALWPPVREKRVRIYLSKGPNVKNWNAWTALETYLQLQEAFGWEPFIRLFTEYRNQTNLPTDNVDKMNLWVKMFSHQVQKNLAPFFEAWAWPIQKEVTTSLAYLPEWKENIMKLYLLTQMPH.

The 300-residue stretch at 542–841 (YCWMSTGLYI…TYLQLQEAFG (300 aa)) folds into the Peptidase M60 domain.

This sequence belongs to the TCAF family. Interacts with TRPM8 (via N-terminus and C-terminus domains); the interaction inhibits TRPM8 channel activity. Interacts with TRPV6.

Its subcellular location is the cell membrane. Positively regulates the plasma membrane cation channel TRPM8 activity. Involved in the recruitment of TRPM8 to the cell surface. Promotes prostate cancer cell migration inhibition in a TRPM8-dependent manner. This is TRPM8 channel-associated factor 1 from Pongo abelii (Sumatran orangutan).